A 339-amino-acid chain; its full sequence is Protein-glutamate methylesterase/protein-glutamine glutaminase 2 (339 aa).

One can recognise a Response regulatory domain in the interval 2–119 (NIGIVNDLPL…GLSTDASPQA (118 aa)). Asp53 bears the 4-aspartylphosphate mark. In terms of domain architecture, CheB-type methylesterase spans 141–336 (PGPAPERGQP…PQLISRITRP (196 aa)). Active-site residues include Ser158, His185, and Asp278.

Belongs to the CheB family. Post-translationally, phosphorylated by CheA. Phosphorylation of the N-terminal regulatory domain activates the methylesterase activity.

Its subcellular location is the cytoplasm. The enzyme catalyses [protein]-L-glutamate 5-O-methyl ester + H2O = L-glutamyl-[protein] + methanol + H(+). It catalyses the reaction L-glutaminyl-[protein] + H2O = L-glutamyl-[protein] + NH4(+). Functionally, involved in chemotaxis. Part of a chemotaxis signal transduction system that modulates chemotaxis in response to various stimuli. Catalyzes the demethylation of specific methylglutamate residues introduced into the chemoreceptors (methyl-accepting chemotaxis proteins or MCP) by CheR. Also mediates the irreversible deamidation of specific glutamine residues to glutamic acid. The polypeptide is Protein-glutamate methylesterase/protein-glutamine glutaminase 2 (Burkholderia lata (strain ATCC 17760 / DSM 23089 / LMG 22485 / NCIMB 9086 / R18194 / 383)).